We begin with the raw amino-acid sequence, 296 residues long: 4-hydroxy-tetrahydrodipicolinate synthase (296 aa).

Thr-49 is a binding site for pyruvate. Tyr-137 serves as the catalytic Proton donor/acceptor. Catalysis depends on Lys-166, which acts as the Schiff-base intermediate with substrate. Residue Ile-208 participates in pyruvate binding.

Belongs to the DapA family. As to quaternary structure, homotetramer; dimer of dimers.

It is found in the cytoplasm. It catalyses the reaction L-aspartate 4-semialdehyde + pyruvate = (2S,4S)-4-hydroxy-2,3,4,5-tetrahydrodipicolinate + H2O + H(+). Its pathway is amino-acid biosynthesis; L-lysine biosynthesis via DAP pathway; (S)-tetrahydrodipicolinate from L-aspartate: step 3/4. Functionally, catalyzes the condensation of (S)-aspartate-beta-semialdehyde [(S)-ASA] and pyruvate to 4-hydroxy-tetrahydrodipicolinate (HTPA). The chain is 4-hydroxy-tetrahydrodipicolinate synthase from Chlorobaculum parvum (strain DSM 263 / NCIMB 8327) (Chlorobium vibrioforme subsp. thiosulfatophilum).